The following is a 199-amino-acid chain: Pyridoxal 5'-phosphate synthase subunit PdxT (199 aa).

47 to 49 (GES) is an L-glutamine binding site. Cysteine 79 acts as the Nucleophile in catalysis. L-glutamine-binding positions include arginine 106 and 133 to 134 (IR). Residues histidine 169 and glutamate 171 each act as charge relay system in the active site.

It belongs to the glutaminase PdxT/SNO family. As to quaternary structure, in the presence of PdxS, forms a dodecamer of heterodimers. Only shows activity in the heterodimer.

It carries out the reaction aldehydo-D-ribose 5-phosphate + D-glyceraldehyde 3-phosphate + L-glutamine = pyridoxal 5'-phosphate + L-glutamate + phosphate + 3 H2O + H(+). The enzyme catalyses L-glutamine + H2O = L-glutamate + NH4(+). It participates in cofactor biosynthesis; pyridoxal 5'-phosphate biosynthesis. Its function is as follows. Catalyzes the hydrolysis of glutamine to glutamate and ammonia as part of the biosynthesis of pyridoxal 5'-phosphate. The resulting ammonia molecule is channeled to the active site of PdxS. The polypeptide is Pyridoxal 5'-phosphate synthase subunit PdxT (Desulfitobacterium hafniense (strain Y51)).